A 311-amino-acid chain; its full sequence is Probable manganese-dependent inorganic pyrophosphatase (311 aa).

Positions 9, 13, 15, 77, 99, and 151 each coordinate Mn(2+).

Belongs to the PPase class C family. The cofactor is Mn(2+).

The protein localises to the cytoplasm. It catalyses the reaction diphosphate + H2O = 2 phosphate + H(+). This Streptococcus agalactiae serotype Ia (strain ATCC 27591 / A909 / CDC SS700) protein is Probable manganese-dependent inorganic pyrophosphatase.